The chain runs to 146 residues: Large ribosomal subunit protein uL23B (146 aa).

The segment at 1 to 22 (MAPSSNKVGKAIQAKKAVVKGS) is disordered.

This sequence belongs to the universal ribosomal protein uL23 family.

Functionally, this protein binds to a specific region on the 26S rRNA. The polypeptide is Large ribosomal subunit protein uL23B (rpl-23A.2) (Caenorhabditis elegans).